A 425-amino-acid chain; its full sequence is Serine--tRNA ligase (425 aa).

229–231 contacts L-serine; sequence TSE. ATP contacts are provided by residues 259–261 and Val-275; that span reads RKE. Glu-282 is an L-serine binding site. An ATP-binding site is contributed by 349-352; sequence EITS. Thr-384 is a binding site for L-serine.

Belongs to the class-II aminoacyl-tRNA synthetase family. Type-1 seryl-tRNA synthetase subfamily. As to quaternary structure, homodimer. The tRNA molecule binds across the dimer.

Its subcellular location is the cytoplasm. It catalyses the reaction tRNA(Ser) + L-serine + ATP = L-seryl-tRNA(Ser) + AMP + diphosphate + H(+). It carries out the reaction tRNA(Sec) + L-serine + ATP = L-seryl-tRNA(Sec) + AMP + diphosphate + H(+). It participates in aminoacyl-tRNA biosynthesis; selenocysteinyl-tRNA(Sec) biosynthesis; L-seryl-tRNA(Sec) from L-serine and tRNA(Sec): step 1/1. Its function is as follows. Catalyzes the attachment of serine to tRNA(Ser). Is also able to aminoacylate tRNA(Sec) with serine, to form the misacylated tRNA L-seryl-tRNA(Sec), which will be further converted into selenocysteinyl-tRNA(Sec). This chain is Serine--tRNA ligase, found in Borreliella afzelii (strain PKo) (Borrelia afzelii).